A 472-amino-acid polypeptide reads, in one-letter code: 3-isopropylmalate dehydratase large subunit (472 aa).

[4Fe-4S] cluster contacts are provided by cysteine 349, cysteine 409, and cysteine 412.

Belongs to the aconitase/IPM isomerase family. LeuC type 1 subfamily. In terms of assembly, heterodimer of LeuC and LeuD. It depends on [4Fe-4S] cluster as a cofactor.

It catalyses the reaction (2R,3S)-3-isopropylmalate = (2S)-2-isopropylmalate. Its pathway is amino-acid biosynthesis; L-leucine biosynthesis; L-leucine from 3-methyl-2-oxobutanoate: step 2/4. In terms of biological role, catalyzes the isomerization between 2-isopropylmalate and 3-isopropylmalate, via the formation of 2-isopropylmaleate. This is 3-isopropylmalate dehydratase large subunit from Rhodospirillum rubrum (strain ATCC 11170 / ATH 1.1.1 / DSM 467 / LMG 4362 / NCIMB 8255 / S1).